Here is a 2335-residue protein sequence, read N- to C-terminus: Histone-lysine N-methyltransferase ATXR3 (2335 aa).

4 disordered regions span residues 30-142, 332-355, 371-556, and 902-961; these read NESK…FKDE, STGNRLKRHGAEPDSIERKHSYAD, CSRS…SSSK, and DQVP…KTDT. Composition is skewed to polar residues over residues 31-46 and 53-62; these read ESKTAATTENGHTSIA and QPANKPSASS. The segment covering 65–84 has biased composition (basic residues); the sequence is VKKKRIVKVIRKVVKRRPKQ. A Nuclear localization signal 1 motif is present at residues 67 to 74; it reads KKRIVKVI. Residues 97–112 show a composition bias toward polar residues; the sequence is PPSQVVQLPAESQLQI. Composition is skewed to basic and acidic residues over residues 340–353, 371–390, and 430–452; these read HGAEPDSIERKHSY, CSRSLHSDHYSQHSAERLYR, and WSPHDRSRYHENRDRSPYARERS. The span at 461–475 shows a compositional bias: basic residues; it reads HARKRSPRDRRHHDY. 3 stretches are compositionally biased toward basic and acidic residues: residues 485 to 498, 507 to 548, and 910 to 921; these read SPHDRSRPSDRRDY, QSDR…ESNG, and PRAKVRSKERCP. The Nuclear localization signal 2 motif lies at 527 to 534; it reads ERRDCQTG. A compositionally biased stretch (low complexity) spans 922 to 932; the sequence is SRPARPSPASS. Polar residues predominate over residues 941–961; the sequence is SHSQSTASTGQDSQGLWKTDT. Residues 1382–1389 carry the Nuclear localization signal 3 motif; the sequence is ARRSSAIL. The tract at residues 1532–1572 is disordered; that stretch reads NRKSFSSESDTSSELSDNGKSDNYSSASASESESDIRSEGR. A compositionally biased stretch (low complexity) spans 1535-1547; it reads SFSSESDTSSELS. Positions 1765–1904 constitute an SET domain; it reads KEIESRSDDK…YGEEITFDYN (140 aa). A Zn(2+)-binding site is contributed by C1868. Y1903 contributes to the S-adenosyl-L-methionine binding site. Residues 1914-1930 enclose the Post-SET domain; that stretch reads EASVCLCGSQVCRGSYL. Positions 1918, 1920, and 1925 each coordinate Zn(2+).

It belongs to the class V-like SAM-binding methyltransferase superfamily. Histone-lysine methyltransferase family. TRX/MLL subfamily. In terms of tissue distribution, expressed in roots, leaves, stems and inflorescences.

The protein localises to the nucleus. The enzyme catalyses L-lysyl(4)-[histone H3] + 3 S-adenosyl-L-methionine = N(6),N(6),N(6)-trimethyl-L-lysyl(4)-[histone H3] + 3 S-adenosyl-L-homocysteine + 3 H(+). Functionally, histone methyltransferase specifically required for trimethylation of 'Lys-4' of histone H3 (H3K4me3) and is crucial for both sporophyte and gametophyte development. Function as a diurnal 'writer' to counteract the nocturne 'eraser' demethylase activity of JMJ14 thus orchestrating the circadian rhythm of histone modifications (e.g. H3K4me3) and modulating the rhythmic expression of diurnal target genes; this mechanism relies also on the circadian clock oscillators CCA1 and LHY. This is Histone-lysine N-methyltransferase ATXR3 from Arabidopsis thaliana (Mouse-ear cress).